The chain runs to 475 residues: UDP-glycosyltransferase 708A6 (475 aa).

UDP-alpha-D-glucose-binding positions include Ser286, 348–349 (WV), 366–374 (HCGWNSLTE), and 388–391 (FGDQ).

It belongs to the UDP-glycosyltransferase family. As to expression, expressed in radicles, hypocotyls and juvenile leaves. Expressed at low levels in roots.

In terms of biological role, bifunctional glycosyltransferase that can produce both C- and O-glycosidated flavonoids. Converts 2-hydroxynaringenin to isovitexin. Converts eriodictyol to orientin and isoorientin. Converts naringenin and eriodictyol to naringenin 7-O-glucoside and eriodictyol 7-O-glucoside, respectively. The protein is UDP-glycosyltransferase 708A6 of Zea mays (Maize).